The following is a 330-amino-acid chain: Probable allantoicase (330 aa).

This sequence belongs to the allantoicase family.

The catalysed reaction is allantoate + H2O = (S)-ureidoglycolate + urea. It functions in the pathway nitrogen metabolism; (S)-allantoin degradation; (S)-ureidoglycolate from allantoate (aminidohydrolase route): step 1/1. The protein is Probable allantoicase of Photobacterium profundum (strain SS9).